Consider the following 475-residue polypeptide: Sulfate adenylyltransferase subunit 1 (475 aa).

A tr-type G domain is found at 25 to 239; it reads KSLLRFLTCG…EVLETVEIQR (215 aa). Residues 34 to 41 form a G1 region; that stretch reads GSVDDGKS. GTP is bound at residue 34–41; that stretch reads GSVDDGKS. Residues 92–96 form a G2 region; that stretch reads GITID. The interval 113 to 116 is G3; sequence DTPG. GTP contacts are provided by residues 113 to 117 and 168 to 171; these read DTPGH and NKMD. The interval 168–171 is G4; that stretch reads NKMD. The tract at residues 206 to 208 is G5; that stretch reads SAL.

This sequence belongs to the TRAFAC class translation factor GTPase superfamily. Classic translation factor GTPase family. CysN/NodQ subfamily. As to quaternary structure, heterodimer composed of CysD, the smaller subunit, and CysN.

The enzyme catalyses sulfate + ATP + H(+) = adenosine 5'-phosphosulfate + diphosphate. Its pathway is sulfur metabolism; hydrogen sulfide biosynthesis; sulfite from sulfate: step 1/3. In terms of biological role, with CysD forms the ATP sulfurylase (ATPS) that catalyzes the adenylation of sulfate producing adenosine 5'-phosphosulfate (APS) and diphosphate, the first enzymatic step in sulfur assimilation pathway. APS synthesis involves the formation of a high-energy phosphoric-sulfuric acid anhydride bond driven by GTP hydrolysis by CysN coupled to ATP hydrolysis by CysD. The sequence is that of Sulfate adenylyltransferase subunit 1 from Shigella flexneri.